Consider the following 327-residue polypeptide: Beta-1,4-galactosyltransferase 7 (327 aa).

The Cytoplasmic segment spans residues 1-30 (MLPSRRKAAQLPWEDGRARLLPGGLRRKCS). Residues 31–51 (IFHLFIAFLLLVFFSLLWLQL) form a helical; Signal-anchor for type II membrane protein membrane-spanning segment. Residues 52–327 (SCSGDMAQVT…KTATPWCIFG (276 aa)) are Lumenal-facing. The segment at 61–88 (TRGQGQETSGPPRACPPEPPPEHWEEDE) is disordered. UDP-alpha-D-galactose contacts are provided by residues 100–104 (PFRER) and 139–141 (FNR). Asparagine 154 carries N-linked (GlcNAc...) asparagine glycosylation. Residues 164-165 (VD), tyrosine 194, and tryptophan 224 contribute to the UDP-alpha-D-galactose site. Aspartate 165 lines the Mn(2+) pocket. Residue 226-229 (REDD) participates in N-acetyl-D-glucosamine binding. Position 257 (histidine 257) interacts with Mn(2+). Residues 257–259 (HLH) and arginine 266 contribute to the UDP-alpha-D-galactose site.

Belongs to the glycosyltransferase 7 family. Mn(2+) is required as a cofactor.

The protein resides in the golgi apparatus. It localises to the golgi stack membrane. The catalysed reaction is 3-O-(beta-D-xylosyl)-L-seryl-[protein] + UDP-alpha-D-galactose = 3-O-(beta-D-galactosyl-(1-&gt;4)-beta-D-xylosyl)-L-seryl-[protein] + UDP + H(+). It functions in the pathway protein modification; protein glycosylation. Functionally, required for the biosynthesis of the tetrasaccharide linkage region of proteoglycans, especially for small proteoglycans in skin fibroblasts. The protein is Beta-1,4-galactosyltransferase 7 (B4galt7) of Mus musculus (Mouse).